A 220-amino-acid chain; its full sequence is MGQKINPLGFRLGTTQSHHSFWFAQPKNYYKGIQEDQKIRDFIKNYVKNNIIISPDTEGIAYIEIQKRIDFLKIMIFIGFKKFLIENRQLGIIKEALHIDLKKNFHYVNRKLIIDIIRITKPYRNPNILAEFIADQLKNRVSFRKTMKKAIELTESEDTKGIQVQISGRIDGKEIARVEWIREGRVPLQTIQAKINYCSYMVRTTHGVLGIKIWIFIEKE.

The region spanning I39 to T120 is the KH type-2 domain.

This sequence belongs to the universal ribosomal protein uS3 family. As to quaternary structure, part of the 30S ribosomal subunit.

It localises to the plastid. The chain is Small ribosomal subunit protein uS3c (rps3) from Epifagus virginiana (Beechdrops).